A 204-amino-acid chain; its full sequence is Holliday junction branch migration complex subunit RuvA (204 aa).

The domain I stretch occupies residues 1 to 64; that stretch reads MIGKLKGTLE…EEAIRLFGFA (64 aa). The interval 65 to 143 is domain II; that stretch reads TRAEQEWFCM…PFEQAVKTVS (79 aa). A flexible linker region spans residues 144–154; sequence VPQREITHQPA. Positions 154–204 are domain III; it reads AHDALSALMKLGFEREQAARALALAMNALEGEAVSSALLIRHSLKLLSSPT.

The protein belongs to the RuvA family. Homotetramer. Forms an RuvA(8)-RuvB(12)-Holliday junction (HJ) complex. HJ DNA is sandwiched between 2 RuvA tetramers; dsDNA enters through RuvA and exits via RuvB. An RuvB hexamer assembles on each DNA strand where it exits the tetramer. Each RuvB hexamer is contacted by two RuvA subunits (via domain III) on 2 adjacent RuvB subunits; this complex drives branch migration. In the full resolvosome a probable DNA-RuvA(4)-RuvB(12)-RuvC(2) complex forms which resolves the HJ.

The protein localises to the cytoplasm. Its function is as follows. The RuvA-RuvB-RuvC complex processes Holliday junction (HJ) DNA during genetic recombination and DNA repair, while the RuvA-RuvB complex plays an important role in the rescue of blocked DNA replication forks via replication fork reversal (RFR). RuvA specifically binds to HJ cruciform DNA, conferring on it an open structure. The RuvB hexamer acts as an ATP-dependent pump, pulling dsDNA into and through the RuvAB complex. HJ branch migration allows RuvC to scan DNA until it finds its consensus sequence, where it cleaves and resolves the cruciform DNA. The protein is Holliday junction branch migration complex subunit RuvA of Bartonella tribocorum (strain CIP 105476 / IBS 506).